The primary structure comprises 217 residues: Probable transaldolase (217 aa).

K83 acts as the Schiff-base intermediate with substrate in catalysis.

Belongs to the transaldolase family. Type 3B subfamily.

Its subcellular location is the cytoplasm. It catalyses the reaction D-sedoheptulose 7-phosphate + D-glyceraldehyde 3-phosphate = D-erythrose 4-phosphate + beta-D-fructose 6-phosphate. It participates in carbohydrate degradation; pentose phosphate pathway; D-glyceraldehyde 3-phosphate and beta-D-fructose 6-phosphate from D-ribose 5-phosphate and D-xylulose 5-phosphate (non-oxidative stage): step 2/3. In terms of biological role, transaldolase is important for the balance of metabolites in the pentose-phosphate pathway. This chain is Probable transaldolase, found in Roseobacter denitrificans (strain ATCC 33942 / OCh 114) (Erythrobacter sp. (strain OCh 114)).